The sequence spans 561 residues: MSENLRSRAVTQGSQRTPNRAMLRAVGFGDDDFNKPIVGVANGFSTITPCNMGINDLAKRAEAGIKSAGGMPQMFGTITISDGISMGTEGMKYSLVSRDVIADSIETACNGQSMDGVIAIGGCDKNMPGAMIAMARMNIPAIFVYGGTIKPGHYNGEDLTVVSAFEAVGQHSAGKIDDNTLLAIERNACPGAGSCGGMFTANTMSSAFEVMGMSLPYSSTMAAEDAEKADSTEKSAFVLVNAIRNQILPRQILTRKAFENAVSVIMAVGGSTNAVLHLLAIANTIGVDLTLDDFETIRQRVPVLCDLKPSGRYVTVNLHQAGGIPQVMKMLLNHGLLHGDALTISGQTIAEILADVPDEPPANQDVIRSWDNPVYKEGHLAILKGNLASEGAVAKISGVKNPQITGPARVFESEEECLEAILAGKINAGDVIIVRYEGPRGGPGMREMLAPTSAIIGAGLGDSVGLITDGRFSGGTYGLVVGHVAPEAYVGGTIGLVEEGDSITIDAKKKLLQVNVSEEELSQRRANWKAPEPRYQRGVLGKYAKLVSSSSLGAVTDLNLF.

Cys50 provides a ligand contact to [2Fe-2S] cluster. Asp82 is a Mg(2+) binding site. Cys123 contributes to the [2Fe-2S] cluster binding site. The Mg(2+) site is built by Asp124 and Lys125. Position 125 is an N6-carboxylysine (Lys125). [2Fe-2S] cluster is bound at residue Cys195. Position 447 (Glu447) interacts with Mg(2+). Ser473 acts as the Proton acceptor in catalysis.

Belongs to the IlvD/Edd family. In terms of assembly, homodimer. The cofactor is [2Fe-2S] cluster. Requires Mg(2+) as cofactor.

The enzyme catalyses (2R)-2,3-dihydroxy-3-methylbutanoate = 3-methyl-2-oxobutanoate + H2O. It carries out the reaction (2R,3R)-2,3-dihydroxy-3-methylpentanoate = (S)-3-methyl-2-oxopentanoate + H2O. It functions in the pathway amino-acid biosynthesis; L-isoleucine biosynthesis; L-isoleucine from 2-oxobutanoate: step 3/4. Its pathway is amino-acid biosynthesis; L-valine biosynthesis; L-valine from pyruvate: step 3/4. In terms of biological role, functions in the biosynthesis of branched-chain amino acids. Catalyzes the dehydration of (2R,3R)-2,3-dihydroxy-3-methylpentanoate (2,3-dihydroxy-3-methylvalerate) into 2-oxo-3-methylpentanoate (2-oxo-3-methylvalerate) and of (2R)-2,3-dihydroxy-3-methylbutanoate (2,3-dihydroxyisovalerate) into 2-oxo-3-methylbutanoate (2-oxoisovalerate), the penultimate precursor to L-isoleucine and L-valine, respectively. The protein is Dihydroxy-acid dehydratase of Crocosphaera subtropica (strain ATCC 51142 / BH68) (Cyanothece sp. (strain ATCC 51142)).